The chain runs to 197 residues: Recombination protein RecR (197 aa).

Residues 56–71 (CERCNTFTETEICQRC) form a C4-type zinc finger. Residues 79-174 (SLLCVVEMPA…RVSRLSRGVP (96 aa)) enclose the Toprim domain.

Belongs to the RecR family.

May play a role in DNA repair. It seems to be involved in an RecBC-independent recombinational process of DNA repair. It may act with RecF and RecO. This is Recombination protein RecR from Aromatoleum aromaticum (strain DSM 19018 / LMG 30748 / EbN1) (Azoarcus sp. (strain EbN1)).